The following is a 280-amino-acid chain: Eukaryotic translation initiation factor 3 subunit F-1 (280 aa).

Residues V8–G138 form the MPN domain.

This sequence belongs to the eIF-3 subunit F family. As to quaternary structure, component of the eukaryotic translation initiation factor 3 (eIF-3) complex. The eIF-3 complex interacts with pix.

Its subcellular location is the cytoplasm. Component of the eukaryotic translation initiation factor 3 (eIF-3) complex, which is involved in protein synthesis of a specialized repertoire of mRNAs and, together with other initiation factors, stimulates binding of mRNA and methionyl-tRNAi to the 40S ribosome. The eIF-3 complex specifically targets and initiates translation of a subset of mRNAs involved in cell proliferation. In Drosophila virilis (Fruit fly), this protein is Eukaryotic translation initiation factor 3 subunit F-1.